The chain runs to 403 residues: Heptahelical transmembrane protein ADIPOR3 (403 aa).

At 1-73 the chain is on the cytoplasmic side; that stretch reads MAAAAGEEVE…LSAFSIHNET (73 aa). Residues 74–94 traverse the membrane as a helical segment; that stretch reads LNVWTHLIGFFIFLVLTIYTA. The Extracellular portion of the chain corresponds to 95–209; that stretch reads TQVPNVVDLQ…QLIRPIPRWP (115 aa). Residues 210 to 230 form a helical membrane-spanning segment; the sequence is FYAFLGGAMFCLLASSTCHLL. The Cytoplasmic segment spans residues 231-246; sequence SCHSRRLAYIMLRLDY. The helical transmembrane segment at 247–267 threads the bilayer; sequence AGIAALIATSFYPPVYYSFMC. Over 268 to 274 the chain is Extracellular; it reads YPFFCNL. The chain crosses the membrane as a helical span at residues 275–295; that stretch reads YLSCITILGVATIAFSLLPVF. Residues 296–306 lie on the Cytoplasmic side of the membrane; that stretch reads QNPEFRTIRAC. A helical membrane pass occupies residues 307-327; it reads LFFGMGASGVIPVIHKLILFW. Residues 328 to 331 lie on the Extracellular side of the membrane; sequence HQPE. Residues 332–352 traverse the membrane as a helical segment; it reads ALHTTAYEVLMGLFYGIGALV. Over 353–374 the chain is Cytoplasmic; it reads YATRVPERWMPGKFDIAGHSHQ. A helical membrane pass occupies residues 375 to 395; that stretch reads LFHVLVVAGAYTHYHSGLVYL. Topologically, residues 396–403 are extracellular; sequence KWRDVQGC.

It belongs to the ADIPOR family.

Its subcellular location is the membrane. Functionally, may play a role in abiotic stress response. The protein is Heptahelical transmembrane protein ADIPOR3 (ADIPOR3) of Oryza sativa subsp. japonica (Rice).